Reading from the N-terminus, the 286-residue chain is 2-dehydro-3-deoxyphosphooctonate aldolase (286 aa).

The protein belongs to the KdsA family.

It is found in the cytoplasm. It carries out the reaction D-arabinose 5-phosphate + phosphoenolpyruvate + H2O = 3-deoxy-alpha-D-manno-2-octulosonate-8-phosphate + phosphate. It participates in carbohydrate biosynthesis; 3-deoxy-D-manno-octulosonate biosynthesis; 3-deoxy-D-manno-octulosonate from D-ribulose 5-phosphate: step 2/3. Its pathway is bacterial outer membrane biogenesis; lipopolysaccharide biosynthesis. This is 2-dehydro-3-deoxyphosphooctonate aldolase from Haemophilus ducreyi (strain 35000HP / ATCC 700724).